The following is a 186-amino-acid chain: Dirigent protein 7 (186 aa).

A signal peptide spans 1 to 21 (MAKLILIIVTQILLIAAVVSA). 3 N-linked (GlcNAc...) asparagine glycosylation sites follow: N70, N91, and N126.

The protein belongs to the plant dirigent protein family. As to quaternary structure, homodimer.

It localises to the secreted. The protein resides in the extracellular space. It is found in the apoplast. Dirigent proteins impart stereoselectivity on the phenoxy radical-coupling reaction, yielding optically active lignans from two molecules of coniferyl alcohol in the biosynthesis of lignans, flavonolignans, and alkaloids and thus plays a central role in plant secondary metabolism. In Arabidopsis thaliana (Mouse-ear cress), this protein is Dirigent protein 7 (DIR7).